The primary structure comprises 512 residues: Kelch repeat protein C2 (512 aa).

The BTB domain maps to 2 to 67 (ESVIFSINGE…IRWKKINITI (66 aa)). Kelch repeat units follow at residues 216–261 (IKHN…LHNC), 262–307 (LYII…VNNG), 309–354 (LYVI…FVND), 356–403 (IYVM…EYDG), 405–449 (IYVI…SCGD), and 452–498 (LIIA…THKS).

The protein belongs to the poxviruses Kelch family.

This chain is Kelch repeat protein C2, found in Homo sapiens (Human).